The chain runs to 245 residues: MRPLSELDPEELIRYISESPKRTIAKFYVKTDDPEGLAERLEERLEDAKVFTGVDHVIVIGEHDDVVEVLESEDSVEYYHKELDHRNRAVPLADYSEFEDVRIEPGAIIREKVKLGKGVVVMMGAVINIGAKIGDGTMVDMNAVVGSRAEVGKNVHIGAGAVIAGVLEPPSAKPVVIEDDVVIGANAVILEGVRVGKGAVVAAGAVVTEDVPPSKVVAGVPARVVKDVDKKTEAKTQIVDALRCL.

Belongs to the transferase hexapeptide repeat family. DapH subfamily.

The catalysed reaction is (S)-2,3,4,5-tetrahydrodipicolinate + acetyl-CoA + H2O = L-2-acetamido-6-oxoheptanedioate + CoA. It participates in amino-acid biosynthesis; L-lysine biosynthesis via DAP pathway; LL-2,6-diaminopimelate from (S)-tetrahydrodipicolinate (acetylase route): step 1/3. In terms of biological role, catalyzes the transfer of an acetyl group from acetyl-CoA to tetrahydrodipicolinate. This is 2,3,4,5-tetrahydropyridine-2,6-dicarboxylate N-acetyltransferase from Methanopyrus kandleri (strain AV19 / DSM 6324 / JCM 9639 / NBRC 100938).